The chain runs to 389 residues: Flap endonuclease 1 (389 aa).

An N-domain region spans residues 1–105 (MGIKGLNKLL…GELAKRKERR (105 aa)). Aspartate 34 is a binding site for Mg(2+). The DNA site is built by arginine 47 and arginine 71. Residues aspartate 87, glutamate 170, glutamate 172, aspartate 191, and aspartate 193 each contribute to the Mg(2+) site. Positions 134–265 (DVTRFEKRTV…QTALKLMKEH (132 aa)) are I-domain. Glutamate 170 contacts DNA. DNA contacts are provided by glycine 243 and aspartate 245. Position 245 (aspartate 245) interacts with Mg(2+). Positions 351 to 359 (PQARLDGFF) are interaction with PCNA. Residues 360 to 389 (KVMPKEGGEKRKADDKKTKGKKPATKKAKK) are disordered. A compositionally biased stretch (basic and acidic residues) spans 362-376 (MPKEGGEKRKADDKK). The span at 377–389 (TKGKKPATKKAKK) shows a compositional bias: basic residues.

The protein belongs to the XPG/RAD2 endonuclease family. FEN1 subfamily. In terms of assembly, interacts with PCNA. Three molecules of FEN1 bind to one PCNA trimer with each molecule binding to one PCNA monomer. PCNA stimulates the nuclease activity without altering cleavage specificity. Requires Mg(2+) as cofactor. Post-translationally, phosphorylated. Phosphorylation upon DNA damage induces relocalization to the nuclear plasma.

The protein resides in the nucleus. It is found in the nucleolus. The protein localises to the nucleoplasm. It localises to the mitochondrion. Its function is as follows. Structure-specific nuclease with 5'-flap endonuclease and 5'-3' exonuclease activities involved in DNA replication and repair. During DNA replication, cleaves the 5'-overhanging flap structure that is generated by displacement synthesis when DNA polymerase encounters the 5'-end of a downstream Okazaki fragment. It enters the flap from the 5'-end and then tracks to cleave the flap base, leaving a nick for ligation. Also involved in the long patch base excision repair (LP-BER) pathway, by cleaving within the apurinic/apyrimidinic (AP) site-terminated flap. Acts as a genome stabilization factor that prevents flaps from equilibrating into structures that lead to duplications and deletions. Also possesses 5'-3' exonuclease activity on nicked or gapped double-stranded DNA, and exhibits RNase H activity. Also involved in replication and repair of rDNA and in repairing mitochondrial DNA. The sequence is that of Flap endonuclease 1 from Yarrowia lipolytica (strain CLIB 122 / E 150) (Yeast).